Reading from the N-terminus, the 514-residue chain is Polygalacturonase (514 aa).

Positions 1 to 22 are cleaved as a signal peptide; it reads MAMKFIAPMAFVAMQLIIMAAA. Positions 23–45 are excised as a propeptide; that stretch reads EDQSAQIMLDSDIEQYLRSNRSL. 5 PbH1 repeats span residues 214–240, 241–262, 264–284, 294–315, and 323–344; these read CEGV…DIFA, SKNF…AIGT, SSNI…SIGS, VSYV…RIKT, and ASHI…LINQ. Catalysis depends on D255, which acts as the Proton donor. The active site involves H278. Residues 434-514 constitute a propeptide that is removed on maturation; that stretch reads AKRKESKSHK…CSRHGKIYHP (81 aa). 2 N-linked (GlcNAc...) asparagine glycosylation sites follow: N460 and N472.

The protein belongs to the glycosyl hydrolase 28 family.

Its subcellular location is the secreted. The protein localises to the plastid. It is found in the amyloplast. It localises to the cell wall. The catalysed reaction is (1,4-alpha-D-galacturonosyl)n+m + H2O = (1,4-alpha-D-galacturonosyl)n + (1,4-alpha-D-galacturonosyl)m.. The chain is Polygalacturonase from Cryptomeria japonica (Japanese cedar).